The chain runs to 562 residues: Sulfite reductase [NADPH] hemoprotein beta-component (562 aa).

[4Fe-4S] cluster-binding residues include Cys-428, Cys-434, Cys-473, and Cys-477. Residue Cys-477 participates in siroheme binding.

The protein belongs to the nitrite and sulfite reductase 4Fe-4S domain family. In terms of assembly, alpha(8)-beta(8). The alpha component is a flavoprotein, the beta component is a hemoprotein. Requires siroheme as cofactor. [4Fe-4S] cluster serves as cofactor.

It carries out the reaction hydrogen sulfide + 3 NADP(+) + 3 H2O = sulfite + 3 NADPH + 4 H(+). It participates in sulfur metabolism; hydrogen sulfide biosynthesis; hydrogen sulfide from sulfite (NADPH route): step 1/1. Component of the sulfite reductase complex that catalyzes the 6-electron reduction of sulfite to sulfide. This is one of several activities required for the biosynthesis of L-cysteine from sulfate. This Myxococcus xanthus (strain DK1622) protein is Sulfite reductase [NADPH] hemoprotein beta-component.